The primary structure comprises 500 residues: NAD(P)H-quinone oxidoreductase chain 4, chloroplastic (500 aa).

14 helical membrane-spanning segments follow: residues 4 to 24 (FPWLTLIVIFPISAGSFLFFL), 35 to 55 (YTLCVCSLELLLTTYTFCYHF), 87 to 107 (FGPILLTGFITTLATLAAWPV), 134 to 154 (LLLFFMMWELELIPVYLLLSM), 167 to 187 (FILYTAGSSIFLLIGVLGIGL), 208 to 228 (ALEIIFYIGFLIAFAVKSPII), 242 to 262 (HYSTCMLLAGILLKMGAYGLV), 272 to 292 (AHSIFAPYLIIVGAIQIVYAA), 305 to 325 (IAYSSVSHMGFIIIGIGSITD), 330 to 350 (GALLQIISHGFIGAALFFLAG), 364 to 384 (MGGMAVAIPKIFTMFSILSMA), 386 to 406 (LALPGMSGFVAELIVFFGIIT), 416 to 436 (ILITFVMAIGMILTPIYSLSM), and 462 to 482 (LFVSISILLPVIGMGIYPDFL).

This sequence belongs to the complex I subunit 4 family.

The protein localises to the plastid. Its subcellular location is the chloroplast thylakoid membrane. It catalyses the reaction a plastoquinone + NADH + (n+1) H(+)(in) = a plastoquinol + NAD(+) + n H(+)(out). The catalysed reaction is a plastoquinone + NADPH + (n+1) H(+)(in) = a plastoquinol + NADP(+) + n H(+)(out). The polypeptide is NAD(P)H-quinone oxidoreductase chain 4, chloroplastic (Pelargonium hortorum (Common geranium)).